We begin with the raw amino-acid sequence, 471 residues long: Adenosylhomocysteinase (471 aa).

Substrate contacts are provided by Thr60, Asp135, and Glu196. 197-199 (TTT) provides a ligand contact to NAD(+). Lys226 and Asp230 together coordinate substrate. Residues Asn231, 260–265 (GYGDVG), Glu283, Asn318, 339–341 (IGH), and Asn387 contribute to the NAD(+) site.

The protein belongs to the adenosylhomocysteinase family. NAD(+) serves as cofactor.

It localises to the cytoplasm. It catalyses the reaction S-adenosyl-L-homocysteine + H2O = L-homocysteine + adenosine. Its pathway is amino-acid biosynthesis; L-homocysteine biosynthesis; L-homocysteine from S-adenosyl-L-homocysteine: step 1/1. May play a key role in the regulation of the intracellular concentration of adenosylhomocysteine. This is Adenosylhomocysteinase from Chlorobium limicola (strain DSM 245 / NBRC 103803 / 6330).